The following is a 137-amino-acid chain: Altered inheritance of mitochondria protein 11 (137 aa).

Helical transmembrane passes span Y20–I37 and L66–L88.

Belongs to the AIM11 family.

Its subcellular location is the membrane. In Saccharomyces cerevisiae (strain YJM789) (Baker's yeast), this protein is Altered inheritance of mitochondria protein 11 (AIM11).